The following is a 391-amino-acid chain: MQGLNADEVLRLLRSLIPGELATGRGQRGDPPEAQDLCADSRLDAEPIRADSLDRLNLASALNRFFRLHETGVEDRLLAVRRIGDMAELIADASQHTSGLTFSTSGSTGTPQPHHHSWAALTQEAEALANALGSHPRVIAWLPVHHLYGFVFGVALPRALGSTVIESHAAPTALFREPAPDDLIATVPARWRYLFDSNHRFPGGTGISSTAALETACRNGLLQAGLDALLEVYGATEAGGIGLRWAPSEDYRLLPHWHGDATATSSALNPDGAAVTVAPLDRLQWRDERVFRPTGRIDDIIQIGGVNVSPGHVARRLESHEAVAACAVRSHGEGSRRRLKAFIVPARSDADPETLRQTLENWIWEHLPAVERPTDLRIGTELPRNAMGKLQ.

Belongs to the ATP-dependent AMP-binding enzyme family.

The enzyme catalyses (E)-4-coumarate + ATP + CoA = (E)-4-coumaroyl-CoA + AMP + diphosphate. Functionally, converts p-coumaric acid into p-coumaryl CoA. This is necessary for the activation of the photoactive yellow protein (PYP) chromophore. This chain is 4-coumarate--CoA ligase (pcl), found in Halorhodospira halophila (Ectothiorhodospira halophila).